Consider the following 145-residue polypeptide: Large ribosomal subunit protein uL15 (145 aa).

A disordered region spans residues 1–50 (MLHTIKPVANARKTTKRLGRGPGSGTGKTSGKGHKGQLARSGKTLRPGFE). Residues 20 to 30 (RGPGSGTGKTS) are compositionally biased toward gly residues.

It belongs to the universal ribosomal protein uL15 family. In terms of assembly, part of the 50S ribosomal subunit.

Functionally, binds to the 23S rRNA. This is Large ribosomal subunit protein uL15 from Phytoplasma australiense.